The primary structure comprises 182 residues: Small ribosomal subunit protein uS4c (182 aa).

Residues leucine 8 to glutamine 36 are disordered. Positions methionine 82 to asparagine 143 constitute an S4 RNA-binding domain.

Belongs to the universal ribosomal protein uS4 family. In terms of assembly, part of the 30S ribosomal subunit. Contacts protein S5. The interaction surface between S4 and S5 is involved in control of translational fidelity.

The protein localises to the plastid. The protein resides in the chloroplast. One of the primary rRNA binding proteins, it binds directly to 16S rRNA where it nucleates assembly of the body of the 30S subunit. In terms of biological role, with S5 and S12 plays an important role in translational accuracy. In Dietes robinsoniana (Lord Howe wedding lily), this protein is Small ribosomal subunit protein uS4c (rps4).